Consider the following 312-residue polypeptide: Ribose-phosphate pyrophosphokinase (312 aa).

ATP-binding positions include 34–36 (DQE) and 93–94 (RQ). Mg(2+)-binding residues include His-127 and Asp-167. Lys-191 is a catalytic residue. D-ribose 5-phosphate is bound by residues Arg-193, Asp-217, and 221-225 (DSGGT).

This sequence belongs to the ribose-phosphate pyrophosphokinase family. Class I subfamily. In terms of assembly, homohexamer. Mg(2+) serves as cofactor.

Its subcellular location is the cytoplasm. The catalysed reaction is D-ribose 5-phosphate + ATP = 5-phospho-alpha-D-ribose 1-diphosphate + AMP + H(+). It participates in metabolic intermediate biosynthesis; 5-phospho-alpha-D-ribose 1-diphosphate biosynthesis; 5-phospho-alpha-D-ribose 1-diphosphate from D-ribose 5-phosphate (route I): step 1/1. Functionally, involved in the biosynthesis of the central metabolite phospho-alpha-D-ribosyl-1-pyrophosphate (PRPP) via the transfer of pyrophosphoryl group from ATP to 1-hydroxyl of ribose-5-phosphate (Rib-5-P). This is Ribose-phosphate pyrophosphokinase from Hyphomonas neptunium (strain ATCC 15444).